A 477-amino-acid polypeptide reads, in one-letter code: Exodeoxyribonuclease 7 large subunit (477 aa).

The interval 456 to 477 (GGTVAPRKAPPKKPGGGQGSLL) is disordered.

The protein belongs to the XseA family. In terms of assembly, heterooligomer composed of large and small subunits.

It localises to the cytoplasm. The catalysed reaction is Exonucleolytic cleavage in either 5'- to 3'- or 3'- to 5'-direction to yield nucleoside 5'-phosphates.. In terms of biological role, bidirectionally degrades single-stranded DNA into large acid-insoluble oligonucleotides, which are then degraded further into small acid-soluble oligonucleotides. This is Exodeoxyribonuclease 7 large subunit from Parvibaculum lavamentivorans (strain DS-1 / DSM 13023 / NCIMB 13966).